We begin with the raw amino-acid sequence, 482 residues long: UDP-N-acetylmuramate--L-alanine ligase (482 aa).

123–129 serves as a coordination point for ATP; the sequence is GTHGKTT.

It belongs to the MurCDEF family.

It localises to the cytoplasm. It carries out the reaction UDP-N-acetyl-alpha-D-muramate + L-alanine + ATP = UDP-N-acetyl-alpha-D-muramoyl-L-alanine + ADP + phosphate + H(+). It participates in cell wall biogenesis; peptidoglycan biosynthesis. Cell wall formation. The polypeptide is UDP-N-acetylmuramate--L-alanine ligase (Pseudomonas putida (strain ATCC 700007 / DSM 6899 / JCM 31910 / BCRC 17059 / LMG 24140 / F1)).